The sequence spans 463 residues: Phosphoglucosamine mutase (463 aa).

Ser101 serves as the catalytic Phosphoserine intermediate. Residues Ser101, Asp256, Asp258, and Asp260 each coordinate Mg(2+). Ser101 is modified (phosphoserine).

This sequence belongs to the phosphohexose mutase family. Mg(2+) is required as a cofactor. In terms of processing, activated by phosphorylation.

It catalyses the reaction alpha-D-glucosamine 1-phosphate = D-glucosamine 6-phosphate. Functionally, catalyzes the conversion of glucosamine-6-phosphate to glucosamine-1-phosphate. The polypeptide is Phosphoglucosamine mutase (Desulforapulum autotrophicum (strain ATCC 43914 / DSM 3382 / VKM B-1955 / HRM2) (Desulfobacterium autotrophicum)).